Consider the following 220-residue polypeptide: Charged multivesicular body protein 2a (220 aa).

Coiled coils occupy residues 12 to 53 (EEML…MAKQ) and 199 to 220 (PSAA…LRRD). The disordered stretch occupies residues 179–208 (LSNLPSTGGSLSVAGAKKGEPSAALADADA). The short motif at 208–218 (ADLEERLNNLR) is the MIT-interacting motif element.

Belongs to the SNF7 family. As to quaternary structure, probable core component of the endosomal sorting required for transport complex III (ESCRT-III). ESCRT-III components are thought to multimerize to form a flat lattice on the perimeter membrane of the endosome.

It localises to the late endosome membrane. The protein resides in the cytoplasm. Functionally, probable core component of the endosomal sorting required for transport complex III (ESCRT-III) which is involved in multivesicular bodies (MVBs) formation and sorting of endosomal cargo proteins into MVBs. MVBs contain intraluminal vesicles (ILVs) that are generated by invagination and scission from the limiting membrane of the endosome and mostly are delivered to lysosomes enabling degradation of membrane proteins, such as stimulated growth factor receptors, lysosomal enzymes and lipids. The chain is Charged multivesicular body protein 2a (chmp2a) from Xenopus tropicalis (Western clawed frog).